Reading from the N-terminus, the 201-residue chain is Holliday junction branch migration complex subunit RuvA (201 aa).

A domain I region spans residues 1-64 (MYEYIRGQFQ…EDFIGLYGFT (64 aa)). The interval 65–143 (TKEELEMFKL…PDELTSEEEQ (79 aa)) is domain II. Residues 144–152 (LIEGINDNS) are flexible linker. A domain III region spans residues 153–201 (DYSFNINETLSALMALGYTEKEAQKALEKVDKTLSIENMIKESLKLLMR).

Belongs to the RuvA family. In terms of assembly, homotetramer. Forms an RuvA(8)-RuvB(12)-Holliday junction (HJ) complex. HJ DNA is sandwiched between 2 RuvA tetramers; dsDNA enters through RuvA and exits via RuvB. An RuvB hexamer assembles on each DNA strand where it exits the tetramer. Each RuvB hexamer is contacted by two RuvA subunits (via domain III) on 2 adjacent RuvB subunits; this complex drives branch migration. In the full resolvosome a probable DNA-RuvA(4)-RuvB(12)-RuvC(2) complex forms which resolves the HJ.

The protein localises to the cytoplasm. Functionally, the RuvA-RuvB-RuvC complex processes Holliday junction (HJ) DNA during genetic recombination and DNA repair, while the RuvA-RuvB complex plays an important role in the rescue of blocked DNA replication forks via replication fork reversal (RFR). RuvA specifically binds to HJ cruciform DNA, conferring on it an open structure. The RuvB hexamer acts as an ATP-dependent pump, pulling dsDNA into and through the RuvAB complex. HJ branch migration allows RuvC to scan DNA until it finds its consensus sequence, where it cleaves and resolves the cruciform DNA. This Clostridium perfringens (strain SM101 / Type A) protein is Holliday junction branch migration complex subunit RuvA.